The chain runs to 1078 residues: Phosphatidylinositol-3,5-bisphosphate 3-phosphatase MTMR4 (1078 aa).

The Myotubularin phosphatase domain occupies 154–571; sequence DHVKSRFQIE…RALQLWTAVY (418 aa). Residues 267 to 290 are disordered; sequence RMPNGNPSNKGNNDGSDNSDTDFD. A compositionally biased stretch (low complexity) spans 270 to 282; it reads NGNPSNKGNNDGS. The a 1,2-diacyl-sn-glycero-3-phospho-(1D-myo-inositol-3,5-bisphosphate) site is built by N321, N346, and I347. N321, N346, and I347 together coordinate a 1,2-diacyl-sn-glycero-3-phospho-(1D-myo-inositol-3-phosphate). Catalysis depends on C408, which acts as the Phosphocysteine intermediate. S409, D410, G411, W412, D413, R414, K450, and R454 together coordinate a 1,2-diacyl-sn-glycero-3-phospho-(1D-myo-inositol-3,5-bisphosphate). 6 residues coordinate a 1,2-diacyl-sn-glycero-3-phospho-(1D-myo-inositol-3-phosphate): S409, D410, G411, W412, D413, and R414. R454 contacts a 1,2-diacyl-sn-glycero-3-phospho-(1D-myo-inositol-3-phosphate). Residues 629–648 are compositionally biased toward polar residues; the sequence is SSDPNLNNHQGNLESCSSSK. The disordered stretch occupies residues 629–694; the sequence is SSDPNLNNHQ…SGSATNQNNN (66 aa). Residues 904 to 935 adopt a coiled-coil conformation; it reads VQQRLRQMEASYKQEVDLLRRQVWELQLQLEI. Residues 960–982 are disordered; that stretch reads DGSDMDDLYSDKSEDRLSEASWE. Basic and acidic residues predominate over residues 968 to 982; it reads YSDKSEDRLSEASWE. The FYVE-type zinc finger occupies 997–1057; the sequence is DHMASHCFNC…VCNTCYDHIQ (61 aa). Positions 1003, 1006, 1019, 1022, 1027, 1030, 1049, and 1052 each coordinate Zn(2+).

Belongs to the protein-tyrosine phosphatase family. Non-receptor class myotubularin subfamily. As to quaternary structure, homooligomeric.

Its subcellular location is the early endosome membrane. The protein localises to the recycling endosome membrane. It localises to the late endosome membrane. It is found in the cytoplasmic vesicle. The protein resides in the phagosome membrane. The catalysed reaction is a 1,2-diacyl-sn-glycero-3-phospho-(1D-myo-inositol-3-phosphate) + H2O = a 1,2-diacyl-sn-glycero-3-phospho-(1D-myo-inositol) + phosphate. The enzyme catalyses a 1,2-diacyl-sn-glycero-3-phospho-(1D-myo-inositol-3,5-bisphosphate) + H2O = a 1,2-diacyl-sn-glycero-3-phospho-(1D-myo-inositol-5-phosphate) + phosphate. It catalyses the reaction 1,2-dioctanoyl-sn-glycero-3-phospho-(1-D-myo-inositol-3-phosphate) + H2O = 1,2-dioctanoyl-sn-glycero-3-phospho-(1D-myo-inositol) + phosphate. It carries out the reaction 1,2-dioctanoyl-sn-glycero-3-phospho-(1D-myo-inositol-3,5-bisphosphate) + H2O = 1,2-dioctanoyl-sn-glycero-3-phospho-(1D-myo-inositol-5-phosphate) + phosphate. In terms of biological role, lipid phosphatase that specifically dephosphorylates the D-3 position of phosphatidylinositol 3-phosphate and phosphatidylinositol 3,5-bisphosphate, generating phosphatidylinositol and phosphatidylinositol 5-phosphate. Decreases the levels of phosphatidylinositol 3-phosphate, a phospholipid found in cell membranes where it acts as key regulator of both cell signaling and intracellular membrane traffic, in a subset of endosomal membranes to negatively regulate both endocytic recycling and trafficking and/or maturation of endosomes toward lysosomes. Through phosphatidylinositol 3-phosphate turnover in phagosome membranes regulates phagocytosis and phagosome maturation. By decreasing phosphatidylinositol 3-monophosphate (PI3P) levels in immune cells it can also regulate the innate immune response. Beside its lipid phosphatase activity, can also function as a molecular adapter to regulate midbody abscission during mitotic cytokinesis. Can also negatively regulate TGF-beta and BMP signaling through Smad proteins dephosphorylation and retention in endosomes. In Xenopus laevis (African clawed frog), this protein is Phosphatidylinositol-3,5-bisphosphate 3-phosphatase MTMR4 (mtmr4).